The chain runs to 297 residues: PIH1 domain-containing protein 1 (297 aa).

Belongs to the PIH1 family.

The protein localises to the nucleus. Functionally, involved in the assembly of C/D box small nucleolar ribonucleoprotein (snoRNP) particles. Recruits the SWI/SNF complex to the core promoter of rRNA genes and enhances pre-rRNA transcription. Mediates interaction of TELO2 with the R2TP complex which is necessary for the stability of MTOR and SMG1. Positively regulates the assembly and activity of the mTORC1 complex. The protein is PIH1 domain-containing protein 1 (pih1d1) of Xenopus laevis (African clawed frog).